The sequence spans 272 residues: Magnetosome protein MamQ (272 aa).

At 1 to 46 the chain is on the cytoplasmic side; that stretch reads MAVSDADASSVDKVESITLQRVKQSEELLAQLYVVEESPRRMGRGP. A helical transmembrane segment spans residues 47-67; sequence VQLMLAISVLSLVAFITTLLM. Residues 68–272 are Lumenal-facing; that stretch reads RYNAFVTMYE…PLTHSQESKN (205 aa).

The protein belongs to the LemA family.

Its subcellular location is the magnetosome membrane. It localises to the cell inner membrane. In terms of biological role, essential for magnetosome formation. Not essential for formation of magnetosome membrane vesicles. One of 7 genes (mamLQBIEMO) able to induce magnetosome membrane biogenesis; coexpression of mamLQRBIEMO in a deletion of the 17 gene mamAB operon restores magnetosome vesicle formation but not magnetite biosynthesis. The polypeptide is Magnetosome protein MamQ (Magnetospirillum gryphiswaldense (strain DSM 6361 / JCM 21280 / NBRC 15271 / MSR-1)).